A 1306-amino-acid polypeptide reads, in one-letter code: MAVNNEVNNAASETPTDVSSSSQKLATEETALTNGADHEEEDGGEAGGEVFQLTVVLPREPHKIQIIVSSQEAIHDVRQSIIELPGTFQYSCFHLEHKGERINDFVQISEVPGLTADSEIHLVEDPYTEKEARIHIIRVRELIGAAGDRTDTLNGIISGASLLDSVTSKESSQNGTSTAPSHPMVGFDFQGSGNLSTLLPRAQEPGPKTVKSISVSPWNPPPYHLRQKGHLLYLQVTTNEGEQFQITSHVSGFYVNKSSTGKFDPSPKSAPKAHSAHSLLALLSDLSPSFEESFKGLQEYNNAKEPLATFQITNATPSNPWIVPSATAPLVAHQADITRTQENYLIAGIENSETLRDWNEEFQSTRELPKDTVQDRVFRERLTSKLFADYNDAAARGAILVARGEIAPLNPTEGKDAQIFVYNNVFFSFGADGVGTFASEGGDEAARAAVGKDVMGVRMVNQLDIDGLFTPGTVVVDYLGKRIVGQSIVPGIFKQRDPGENQIDYGAVDGKDIVASDEKFVSVFEKLSKALKVKKHAVWDKDAKRHDLEGSIETKGLLGTDGRKYVLDLYRVTPLDITWMEEVGTALDSPKEADAASESAYPHRMTVIRPELVEAYWKVKMREWVNGELERKRQAQKAVEPAAEGKEIEAATEASEPAKSEEPTENGELAKKSESDEAAEPSKPDQERIDIGDFKFALNPDAFSGQQPQTDEEKTEFAEDEQQVRLVCEFLRKTVLPELVKDLKEGDVGFPMDGQSLSRLLHKRGINLRYLGQVATLADGKRLESLRILAVQEMVSRAFKHVAGNYLRYLPIPLTSSCIAHLLNCLLGTDLNAAPKPDVDEAIAALYPEADLKFKEVTPESLKQEIEGQVLRRFRYTLDSTWTAGIKHLQLLREVSLKLGIQLEMKPYHFTKQSQTESAAAPPATNGEATKEAAPTGKSTNGKKKKKNAREASPAAVVSANAASPVTFNPDDILNTVPVIKEASPRSSLAEEALEAGRISLLQDQKKLGQELLLESLSLHEQIYGILHPEVARVYNSLSMLYYQLDEKEAAMELARKAVIVSERTLGVDNAETLLNYLNLGLIAHASGETKLALTYIKHALDLWKVVYGPNHPDSITTINNAAVMLQHLKEYHDSRTWFEASLKICEEVYGKHSINAATLLFQLAQALALDQDSKSAVNRMRESYNIFLTELGAEDKNTKEAEKWLEQLTQNAVSIAKHAKDVQARRNRGIRVSPRVTLGQTQVQPQIGQTVEAAAGRDTPRGLDSRSIDELLKFIEGSDQSNQNKKRPGRSNPKRRGGAAATAGK.

Residues 1 to 11 show a composition bias toward low complexity; the sequence is MAVNNEVNNAA. The interval 1-47 is disordered; sequence MAVNNEVNNAASETPTDVSSSSQKLATEETALTNGADHEEEDGGEAG. The span at 12 to 33 shows a compositional bias: polar residues; that stretch reads SETPTDVSSSSQKLATEETALT. A Clu domain is found at 336 to 580; that stretch reads DITRTQENYL…RVTPLDITWM (245 aa). 2 disordered regions span residues 630–689 and 912–956; these read ERKR…QERI and KQSQ…SPAA. Basic and acidic residues predominate over residues 656–689; sequence EPAKSEEPTENGELAKKSESDEAAEPSKPDQERI. TPR repeat units lie at residues 1032–1065, 1074–1107, and 1116–1149; these read ARVYNSLSMLYYQLDEKEAAMELARKAVIVSERT, LLNYLNLGLIAHASGETKLALTYIKHALDLWKVV, and ITTINNAAVMLQHLKEYHDSRTWFEASLKICEEV. The segment at 1275 to 1306 is disordered; the sequence is FIEGSDQSNQNKKRPGRSNPKRRGGAAATAGK. Positions 1285–1298 are enriched in basic residues; it reads NKKRPGRSNPKRRG.

It belongs to the CLU family. May associate with the eukaryotic translation initiation factor 3 (eIF-3) complex.

It localises to the cytoplasm. MRNA-binding protein involved in proper cytoplasmic distribution of mitochondria. This chain is Clustered mitochondria protein homolog, found in Botryotinia fuckeliana (strain B05.10) (Noble rot fungus).